A 1030-amino-acid polypeptide reads, in one-letter code: Alpha-L-rhamnosidase (1030 aa).

The carbohydrate-binding module-67 (CBM67) stretch occupies residues 133-297 (PSLEGSSWIW…GAGPWGRVAP (165 aa)). Ca(2+) is bound by residues aspartate 179 and asparagine 180. Alpha-L-rhamnose-binding positions include 179–180 (DN) and tryptophan 203. Ca(2+) is bound by residues asparagine 228 and proline 233. Residues aspartate 630, 634-636 (RDE), aspartate 643, and tryptophan 695 each bind alpha-L-rhamnose. Glutamate 636 (proton donor) is an active-site residue. Catalysis depends on glutamate 895, which acts as the Proton acceptor. Histidine 916 serves as a coordination point for alpha-L-rhamnose.

Belongs to the glycosyl hydrolase 78 family.

It catalyses the reaction Hydrolysis of terminal non-reducing alpha-L-rhamnose residues in alpha-L-rhamnosides.. Functionally, alpha-L-rhamnosidase which is able to degrade p-nitrophenyl-alpha-L-rhamnopyranoside (PNP-Rha) in vitro. Releases L-rhamnose from citrus flavonoids such as naringin, rutin and hesperidin, and the arabinogalactan-protein (AGP) gum arabic. AGPs are a family of proteoglycans that are localized on the cell surfaces of higher plants. Cleaves both the alpha-1,6 and the alpha-1,2-linked rhamnosyl residues. In Streptomyces avermitilis (strain ATCC 31267 / DSM 46492 / JCM 5070 / NBRC 14893 / NCIMB 12804 / NRRL 8165 / MA-4680), this protein is Alpha-L-rhamnosidase.